The following is a 163-amino-acid chain: Protein-export protein SecB (163 aa).

The protein belongs to the SecB family. In terms of assembly, homotetramer, a dimer of dimers. One homotetramer interacts with 1 SecA dimer.

It localises to the cytoplasm. In terms of biological role, one of the proteins required for the normal export of preproteins out of the cell cytoplasm. It is a molecular chaperone that binds to a subset of precursor proteins, maintaining them in a translocation-competent state. It also specifically binds to its receptor SecA. The polypeptide is Protein-export protein SecB (Burkholderia cenocepacia (strain ATCC BAA-245 / DSM 16553 / LMG 16656 / NCTC 13227 / J2315 / CF5610) (Burkholderia cepacia (strain J2315))).